We begin with the raw amino-acid sequence, 490 residues long: Subtilisin-like protease 8 (490 aa).

The first 26 residues, 1–26, serve as a signal peptide directing secretion; that stretch reads MKGLLSLSVLPVLAYASPMIVDSIHQ. The propeptide occupies 27 to 134; the sequence is NAAPILSSTN…YIERDSEVHT (108 aa). Residues 43–134 enclose the Inhibitor I9 domain; the sequence is SYIVVFKKGV…YIERDSEVHT (92 aa). Positions 144-450 constitute a Peptidase S8 domain; that stretch reads PWGLARISHR…GGSDDYKKII (307 aa). Residues D180 and H212 each act as charge relay system in the active site. N282 carries an N-linked (GlcNAc...) asparagine glycan. The active-site Charge relay system is the S378. Residue N456 is glycosylated (N-linked (GlcNAc...) asparagine).

Belongs to the peptidase S8 family.

Its subcellular location is the secreted. Functionally, secreted subtilisin-like serine protease with keratinolytic activity that contributes to pathogenicity. The polypeptide is Subtilisin-like protease 8 (SUB8) (Arthroderma benhamiae (strain ATCC MYA-4681 / CBS 112371) (Trichophyton mentagrophytes)).